The sequence spans 54 residues: UPF0391 membrane protein Aave_3864 (54 aa).

The next 2 helical transmembrane spans lie at 5-25 (AVVF…GIAA) and 28-48 (VGIA…TFVL).

Belongs to the UPF0391 family.

Its subcellular location is the cell membrane. This is UPF0391 membrane protein Aave_3864 from Paracidovorax citrulli (strain AAC00-1) (Acidovorax citrulli).